We begin with the raw amino-acid sequence, 296 residues long: Malonyl-[acyl-carrier protein] O-methyltransferase (296 aa).

The protein belongs to the methyltransferase superfamily.

It carries out the reaction malonyl-[ACP] + S-adenosyl-L-methionine = malonyl-[ACP] methyl ester + S-adenosyl-L-homocysteine. It participates in cofactor biosynthesis; biotin biosynthesis. In terms of biological role, converts the free carboxyl group of a malonyl-thioester to its methyl ester by transfer of a methyl group from S-adenosyl-L-methionine (SAM). It allows to synthesize pimeloyl-ACP via the fatty acid synthetic pathway. The polypeptide is Malonyl-[acyl-carrier protein] O-methyltransferase (Methylovorus sp. (strain MP688)).